A 385-amino-acid chain; its full sequence is Putative transporter YthQ (385 aa).

8 helical membrane-spanning segments follow: residues 24 to 44 (AVID…FVIY), 67 to 87 (WLYA…FLME), 106 to 128 (YALL…IVLP), 133 to 155 (SVLI…HIFF), 176 to 193 (TLVR…IVFT), 197 to 214 (LLAL…IRSL), 304 to 324 (AFTV…LLVY), and 365 to 385 (ILHY…LLFT).

The protein resides in the cell membrane. The protein is Putative transporter YthQ (ythQ) of Bacillus subtilis (strain 168).